The primary structure comprises 129 residues: Glycine cleavage system H protein (129 aa).

Residues 24 to 106 (TFTVGISEHA…YGDGWLFRIK (83 aa)) enclose the Lipoyl-binding domain. At K65 the chain carries N6-lipoyllysine.

It belongs to the GcvH family. As to quaternary structure, the glycine cleavage system is composed of four proteins: P, T, L and H. (R)-lipoate serves as cofactor.

Its function is as follows. The glycine cleavage system catalyzes the degradation of glycine. The H protein shuttles the methylamine group of glycine from the P protein to the T protein. The protein is Glycine cleavage system H protein of Pseudoalteromonas atlantica (strain T6c / ATCC BAA-1087).